Reading from the N-terminus, the 549-residue chain is Probable protein kinase UbiB (549 aa).

In terms of domain architecture, Protein kinase spans aspartate 123–leucine 501. ATP is bound by residues leucine 129–valine 137 and lysine 152. The active-site Proton acceptor is aspartate 287. A run of 2 helical transmembrane segments spans residues serine 498–threonine 517 and threonine 521–tryptophan 540.

This sequence belongs to the ABC1 family. UbiB subfamily.

The protein localises to the cell inner membrane. Its pathway is cofactor biosynthesis; ubiquinone biosynthesis [regulation]. In terms of biological role, is probably a protein kinase regulator of UbiI activity which is involved in aerobic coenzyme Q (ubiquinone) biosynthesis. This chain is Probable protein kinase UbiB, found in Shewanella denitrificans (strain OS217 / ATCC BAA-1090 / DSM 15013).